The primary structure comprises 103 residues: Small ribosomal subunit protein bS6c (103 aa).

The protein belongs to the bacterial ribosomal protein bS6 family.

The protein localises to the plastid. It localises to the chloroplast. In terms of biological role, binds together with bS18 to 16S ribosomal RNA. This is Small ribosomal subunit protein bS6c from Gracilaria tenuistipitata var. liui (Red alga).